The sequence spans 332 residues: MGVPPLHPEISAAYSVLETGEPIGREAALMLAALPGEHALDIASLANKVRNRWGKGGVHACSIMNAKSGVCGENCRFCAQSRHNHSDIEVYPLVDEDAVLFEARGCVEQGVSHFGIVTSGYGYLKMSDEFQRILSMIDRLHSELPSLQVCASLGVLGPDTAKALAGRGIAHYNINIQVTPGRYGELIADTHAVEERMETVRLLRRNGVSVCCGGIIGVGEHMEDRVEMMFALRELDVSVIPINVLVPIKGTPLEGAPSLPLDEIVKTFAIMRLVHPRKTIKFAAGRETVMKDFQGLLMLSGADGLLTGGYLTTRGREVADDTRFRAQLASFS.

A Radical SAM core domain is found at W53 to A283. The [4Fe-4S] cluster site is built by C71, C75, and C78. [2Fe-2S] cluster-binding residues include C150, C211, and K281.

This sequence belongs to the radical SAM superfamily. Biotin synthase family. As to quaternary structure, homodimer. [4Fe-4S] cluster serves as cofactor. Requires [2Fe-2S] cluster as cofactor.

The catalysed reaction is (4R,5S)-dethiobiotin + (sulfur carrier)-SH + 2 reduced [2Fe-2S]-[ferredoxin] + 2 S-adenosyl-L-methionine = (sulfur carrier)-H + biotin + 2 5'-deoxyadenosine + 2 L-methionine + 2 oxidized [2Fe-2S]-[ferredoxin]. It functions in the pathway cofactor biosynthesis; biotin biosynthesis; biotin from 7,8-diaminononanoate: step 2/2. Functionally, catalyzes the conversion of dethiobiotin (DTB) to biotin by the insertion of a sulfur atom into dethiobiotin via a radical-based mechanism. This is Biotin synthase from Chlorobium luteolum (strain DSM 273 / BCRC 81028 / 2530) (Pelodictyon luteolum).